An 821-amino-acid chain; its full sequence is MGKRLFWTALSGLMVSAAHAAPPAPLPAQQLDWQPWGDQAPNGALCSGRYVEPGYRLSAGDTPRQVRTDSATAAYGDGGATVLAGEVVLRRDDTQLEAPRVRVNAERDRAFAEGPTAVRYPGLLVRGGDASMALDGDAAQVDNAHYVIHEQRVRGDAIELQRLPDGRYRLDDASFTTCEPGNRLWRMVGSDVTLDRAEGFGTATHARLEMGDVPVFYWPWLRFPIDDRRQSGFLWPTLGFSGDGLDYTQPYYLNLAPNYDATLSPRWMSEHGTMLGGEFRYLFGSDQGTIEGAYLASDKGGASDNPNDPDDAFEDESRWYIDYRHAGRFSPRLDYQLAYGAASDGRYFDDFGRDFAEQDTDHLLRLARTTYRGDTWRLDARAQGYQKLDYPLDEDDKPFYRLPSLSADARWRQDSGFYQEWNSNATYFWRDLHGVDSQGRWTDEETGNRRTIPLREAANGSRLHLTPALGWRAEPSWGFLEPRAQLWQSSYQLDYGNRQTDRDENPSLVAPVLSMDSGLIFERDTSLFGSDWRQTLEPRLYYAYVPERDQSDFPDFDTSERAVSWGQLWSPYRFTGADRLGDVNKLSYGASTRFLEDDTGRERLSLSVGQSSYFSDRNIDMNGDPDTLPNKERNYQDWYNATRDRSPVITQLDWRISERWRSRYAWFYDADRSVTEKASAYLQYNDPAGHVLNLGYSWQLEGFEPADDAEDRLGYNREDYDVSFAYQATPSLDLIGRFLYDNTNDRAMEQLAGVQFNDCCSAVQLVWREWIEDNDTANTIDDDYTDRGVFLRFVFKGLGGVGQEADTYFEEAIPGYRATRF.

The first 20 residues, 1 to 20 (MGKRLFWTALSGLMVSAAHA), serve as a signal peptide directing secretion.

This sequence belongs to the LptD family. Component of the lipopolysaccharide transport and assembly complex. Interacts with LptE and LptA.

The protein localises to the cell outer membrane. Functionally, together with LptE, is involved in the assembly of lipopolysaccharide (LPS) at the surface of the outer membrane. This chain is LPS-assembly protein LptD, found in Chromohalobacter salexigens (strain ATCC BAA-138 / DSM 3043 / CIP 106854 / NCIMB 13768 / 1H11).